The primary structure comprises 179 residues: MQRKPSQKSATDKLFNHRVNEKITGVSRVRLVSDDGVAIVSFEEALRKAKEENLDLVEVSADQELHVCKIIDYGKYKFELLKKSKEAKKKQHVINVKEIKIRPRIESHDYEIKKKHAQEFLGKGDKVKVSLRFRGREMMHSDLGMKVVYRMIEDLKEHGTAERDPIQDGKQIVVIINPK.

It belongs to the IF-3 family. Monomer.

Its subcellular location is the cytoplasm. IF-3 binds to the 30S ribosomal subunit and shifts the equilibrium between 70S ribosomes and their 50S and 30S subunits in favor of the free subunits, thus enhancing the availability of 30S subunits on which protein synthesis initiation begins. This is Translation initiation factor IF-3 from Leptospira interrogans serogroup Icterohaemorrhagiae serovar copenhageni (strain Fiocruz L1-130).